Here is a 285-residue protein sequence, read N- to C-terminus: Protease HtpX homolog (285 aa).

Helical transmembrane passes span 7-27 and 30-50; these read TAML…MIGG and GMTI…WFSD. A Zn(2+)-binding site is contributed by His-131. Residue Glu-132 is part of the active site. Zn(2+) is bound at residue His-135. Helical transmembrane passes span 141-161 and 177-197; these read ILIS…ANFA and IAGI…QMAI. A Zn(2+)-binding site is contributed by Glu-202.

It belongs to the peptidase M48B family. The cofactor is Zn(2+).

It localises to the cell inner membrane. The polypeptide is Protease HtpX homolog (Paraburkholderia phytofirmans (strain DSM 17436 / LMG 22146 / PsJN) (Burkholderia phytofirmans)).